The sequence spans 85 residues: U4-theraphotoxin-Hhn1o (85 aa).

Positions 1-22 (MKVTLIAILTCAAVLVLHTTAA) are cleaved as a signal peptide. Residues 23–48 (EELEAESQLMEVGMPDTELAAVDEER) constitute a propeptide that is removed on maturation. Cystine bridges form between cysteine 52/cysteine 66, cysteine 56/cysteine 77, and cysteine 71/cysteine 82.

The protein belongs to the neurotoxin 12 (Hwtx-2) family. 02 (Hwtx-2) subfamily. As to expression, expressed by the venom gland.

Its subcellular location is the secreted. In terms of biological role, postsynaptic neurotoxin. This Cyriopagopus hainanus (Chinese bird spider) protein is U4-theraphotoxin-Hhn1o.